A 485-amino-acid polypeptide reads, in one-letter code: METVQLRNNPRRHLKKLSEESLNKQPEEVFDVLEKLGEGSYGSVYKASHKETSQIVAIKQIPVESDLQEIIKEISIMQQCDSPHVVKYYGSYFKNTDLWIVMEFCGGGSVSDIIRLRKQTLNEDEIATILQSTLKGLEYLHFMRKIHRDIKAGNILLSCEGTAKLADFGVAGQLTDTMAKRNTVIGTPFWMAPEVIQEIGYNCVADIWSLGITAIEMAEGKPPYAEIHPMRAIFMIPSNPPPTFRKPELWSKDFVDFINLCLVKNPELRSSATELLQHPFIKAAKGESILRHLLNAAQDEKLKRTELKQREVEPEEKENVNEDEVDVGTMVQAGGKDLNTMKELGMMSEGADGTMVEKDKLETQMGTMLINDEDEEEETGTMKQCTEPAQQAKPSFLEYFEQKENQFGTPEKTSPTSTDPSEWKIPLNGDYSFLKDWSVAEVQLKLNSLDPMMEREIEEIHHKYQAKRQPILEAIESKKRRQQNF.

The region spanning 30–281 (FDVLEKLGEG…ATELLQHPFI (252 aa)) is the Protein kinase domain. Residues 36–44 (LGEGSYGSV) and Lys59 contribute to the ATP site. Residue Asp149 is the Proton acceptor of the active site. Residue Thr183 is modified to Phosphothreonine; by autocatalysis. An SARAH domain is found at 431 to 478 (YSFLKDWSVAEVQLKLNSLDPMMEREIEEIHHKYQAKRQPILEAIESK).

The protein belongs to the protein kinase superfamily. STE Ser/Thr protein kinase family. STE20 subfamily. As to quaternary structure, homodimer; mediated via the coiled-coil region. The cofactor is Mg(2+). Post-translationally, autophosphorylated on Thr-183. Proteolytically cleaved by caspase-3 during apoptosis at Asp-326 resulting in a 37 kDa form. Proteolytic cleavage results in kinase activation and nuclear translocation of the truncated form (MST1/N).

The protein resides in the cytoplasm. The protein localises to the nucleus. It catalyses the reaction L-seryl-[protein] + ATP = O-phospho-L-seryl-[protein] + ADP + H(+). It carries out the reaction L-threonyl-[protein] + ATP = O-phospho-L-threonyl-[protein] + ADP + H(+). Its activity is regulated as follows. The C-terminal non-catalytic region inhibits the kinase activity, the enzyme is activated by caspase-cleavage. Homodimerization and autophosphorylation of Thr-183 is also required for full activation. In terms of biological role, stress-activated, pro-apoptotic kinase which, following caspase-cleavage, enters the nucleus and induces chromatin condensation followed by internucleosomal DNA fragmentation. Key component of the Hippo signaling pathway which plays a pivotal role in organ size control and tumor suppression by restricting proliferation and promoting apoptosis. The core of this pathway is composed of a kinase cascade wherein stk3/mst2 and stk4/mst1, in complex with its regulatory protein sav1, phosphorylates and activates lats1/2 in complex with its regulatory protein mob1, which in turn phosphorylates and inactivates yap1 oncoprotein and wwtr1/taz. Phosphorylation of yap1 by lats2 inhibits its translocation into the nucleus to regulate cellular genes important for cell proliferation, cell death, and cell migration. Phosphorylates 'Ser-14' of histone H2B (H2BS14ph) during apoptosis. The sequence is that of Serine/threonine-protein kinase 4 (stk4) from Xenopus laevis (African clawed frog).